The following is a 353-amino-acid chain: Photosystem II D2 protein (353 aa).

At T2 the chain carries N-acetylthreonine. Residue T2 is modified to Phosphothreonine. Residues C41–T61 traverse the membrane as a helical segment. Position 118 (H118) interacts with chlorophyll a. A helical membrane pass occupies residues G125–P141. Pheophytin a is bound by residues Q130 and N143. The helical transmembrane segment at V153–S166 threads the bilayer. H198 contributes to the chlorophyll a binding site. The chain crosses the membrane as a helical span at residues A208–D228. Positions 215 and 262 each coordinate a plastoquinone. H215 is a Fe cation binding site. H269 serves as a coordination point for Fe cation. The chain crosses the membrane as a helical span at residues G279–R295.

It belongs to the reaction center PufL/M/PsbA/D family. PSII is composed of 1 copy each of membrane proteins PsbA, PsbB, PsbC, PsbD, PsbE, PsbF, PsbH, PsbI, PsbJ, PsbK, PsbL, PsbM, PsbT, PsbX, PsbY, PsbZ, Psb30/Ycf12, at least 3 peripheral proteins of the oxygen-evolving complex and a large number of cofactors. It forms dimeric complexes. It depends on The D1/D2 heterodimer binds P680, chlorophylls that are the primary electron donor of PSII, and subsequent electron acceptors. It shares a non-heme iron and each subunit binds pheophytin, quinone, additional chlorophylls, carotenoids and lipids. There is also a Cl(-1) ion associated with D1 and D2, which is required for oxygen evolution. The PSII complex binds additional chlorophylls, carotenoids and specific lipids. as a cofactor.

It is found in the plastid. Its subcellular location is the chloroplast thylakoid membrane. The catalysed reaction is 2 a plastoquinone + 4 hnu + 2 H2O = 2 a plastoquinol + O2. Its function is as follows. Photosystem II (PSII) is a light-driven water:plastoquinone oxidoreductase that uses light energy to abstract electrons from H(2)O, generating O(2) and a proton gradient subsequently used for ATP formation. It consists of a core antenna complex that captures photons, and an electron transfer chain that converts photonic excitation into a charge separation. The D1/D2 (PsbA/PsbD) reaction center heterodimer binds P680, the primary electron donor of PSII as well as several subsequent electron acceptors. D2 is needed for assembly of a stable PSII complex. This is Photosystem II D2 protein from Arabis hirsuta (Hairy rock-cress).